The following is a 442-amino-acid chain: Tyrosine-protein kinase transforming protein RYK (442 aa).

In terms of domain architecture, Protein kinase spans 45–316 (LSLGKVLGEG…QLKVHLEKLL (272 aa)). ATP is bound by residues 51–59 (LGEGEFGSV) and K77. The active-site Proton acceptor is the D181. A Phosphotyrosine; by autocatalysis modification is found at Y212.

Belongs to the protein kinase superfamily. Tyr protein kinase family. AXL/UFO subfamily.

The protein resides in the host cell membrane. The enzyme catalyses L-tyrosyl-[protein] + ATP = O-phospho-L-tyrosyl-[protein] + ADP + H(+). The chain is Tyrosine-protein kinase transforming protein RYK (V-RYK) from Avian retrovirus RPL30.